Here is a 393-residue protein sequence, read N- to C-terminus: DNA primase small subunit PriS (393 aa).

Residues Asp-100, Asp-102, and Asp-296 contribute to the active site.

This sequence belongs to the eukaryotic-type primase small subunit family. Heterodimer of a small subunit (PriS) and a large subunit (PriL). Mg(2+) is required as a cofactor. The cofactor is Mn(2+).

Functionally, catalytic subunit of DNA primase, an RNA polymerase that catalyzes the synthesis of short RNA molecules used as primers for DNA polymerase during DNA replication. The small subunit contains the primase catalytic core and has DNA synthesis activity on its own. Binding to the large subunit stabilizes and modulates the activity, increasing the rate of DNA synthesis while decreasing the length of the DNA fragments, and conferring RNA synthesis capability. The DNA polymerase activity may enable DNA primase to also catalyze primer extension after primer synthesis. May also play a role in DNA repair. The polypeptide is DNA primase small subunit PriS (Natronomonas pharaonis (strain ATCC 35678 / DSM 2160 / CIP 103997 / JCM 8858 / NBRC 14720 / NCIMB 2260 / Gabara) (Halobacterium pharaonis)).